Reading from the N-terminus, the 638-residue chain is Chaperone protein DnaK (638 aa).

At threonine 199 the chain carries Phosphothreonine; by autocatalysis. Residues 603-618 show a composition bias toward low complexity; it reads YAQPGAEAGAEQQGSA. Positions 603-638 are disordered; it reads YAQPGAEAGAEQQGSANNADDDIVDAEFEEVNDDKK. The segment covering 621-638 has biased composition (acidic residues); sequence ADDDIVDAEFEEVNDDKK.

It belongs to the heat shock protein 70 family.

Functionally, acts as a chaperone. This chain is Chaperone protein DnaK, found in Hydrogenovibrio crunogenus (strain DSM 25203 / XCL-2) (Thiomicrospira crunogena).